The primary structure comprises 106 residues: UPF0213 protein VPA1222 (106 aa).

A GIY-YIG domain is found at 7–82 (QHWSVYLIRN…KQLTKSKKEQ (76 aa)).

The protein belongs to the UPF0213 family.

The chain is UPF0213 protein VPA1222 from Vibrio parahaemolyticus serotype O3:K6 (strain RIMD 2210633).